We begin with the raw amino-acid sequence, 385 residues long: MSWQQRVDDALTARRATDTLRRRYVVSQGAGRWLVANGRQYLNFSSNDYLGLSQHPQIIRAWQQAATRFGVGSGGSGHISGYSVAHQALEEELAQWLGYPRALLFISGFAANQAVITALMKKNDRIVADRLSHASLLEAANLSPAQLRRFIHNDTQHLSRLLQSPSVGQQLVVTEGVYSMDGDSAPLAEIQHIARRHHAWLLVDDAHGIGVTGDEGRGTCWLRGVKPELLVVTFGKGFGVSGAAVLCSESVADYLLQFARHLVYSTSMPPAQAQALSASLAVIRSDEGGERREKLAALVQRFRAGVNASRFTLLNAHSAIQPLIVGDNSRALRLAEALRQQGCWATAIRPPTVPVGTARLRLTLTQAHEACDIDRLLEVLHGAGE.

R21 contributes to the substrate binding site. Residue G108–F109 coordinates pyridoxal 5'-phosphate. H133 is a substrate binding site. Pyridoxal 5'-phosphate-binding residues include S179, H207, and T233. An N6-(pyridoxal phosphate)lysine modification is found at K236. Substrate is bound at residue T352.

The protein belongs to the class-II pyridoxal-phosphate-dependent aminotransferase family. BioF subfamily. Homodimer. Pyridoxal 5'-phosphate is required as a cofactor.

The catalysed reaction is 6-carboxyhexanoyl-[ACP] + L-alanine + H(+) = (8S)-8-amino-7-oxononanoate + holo-[ACP] + CO2. It participates in cofactor biosynthesis; biotin biosynthesis. In terms of biological role, catalyzes the decarboxylative condensation of pimeloyl-[acyl-carrier protein] and L-alanine to produce 8-amino-7-oxononanoate (AON), [acyl-carrier protein], and carbon dioxide. The sequence is that of 8-amino-7-oxononanoate synthase from Salmonella paratyphi B (strain ATCC BAA-1250 / SPB7).